Reading from the N-terminus, the 162-residue chain is Ribonuclease H (162 aa).

The 141-residue stretch at 1 to 141 (MKRIEIFTDG…ADALARAGMA (141 aa)) folds into the RNase H type-1 domain. 4 residues coordinate Mg(2+): aspartate 9, glutamate 47, aspartate 69, and aspartate 133. Positions 139 to 162 (GMAPFKKKKGGDTASSEEGSARRR) are disordered.

This sequence belongs to the RNase H family. In terms of assembly, monomer. It depends on Mg(2+) as a cofactor.

It is found in the cytoplasm. The catalysed reaction is Endonucleolytic cleavage to 5'-phosphomonoester.. Endonuclease that specifically degrades the RNA of RNA-DNA hybrids. This is Ribonuclease H from Chelativorans sp. (strain BNC1).